The chain runs to 310 residues: Lymphotoxin-beta (310 aa).

The Cytoplasmic segment spans residues 1-27 (MGALGLQGRGGRPQGTGCLLLAVAGAT). Residues 28–48 (SLVTLLLAVPITVLAVLALVP) traverse the membrane as a helical; Signal-anchor for type II membrane protein segment. Residues 49–310 (QEQGGLVMES…LGKCLHSANV (262 aa)) lie on the Extracellular side of the membrane. A disordered region spans residues 67–86 (QGLSKSNGLPSRLHSQIPSS). A THD domain is found at 138-293 (PAAHLIGAWM…GKTFFGAVMV (156 aa)). The N-linked (GlcNAc...) asparagine glycan is linked to N272.

It belongs to the tumor necrosis factor family. As to quaternary structure, heterotrimer of either two LTB and one LTA subunits or (less prevalent) two LTA and one LTB subunits.

It localises to the membrane. In terms of biological role, cytokine that binds to LTBR/TNFRSF3. May play a specific role in immune response regulation. Provides the membrane anchor for the attachment of the heterotrimeric complex to the cell surface. In Marmota monax (Woodchuck), this protein is Lymphotoxin-beta (LTB).